We begin with the raw amino-acid sequence, 155 residues long: Ribosomal RNA large subunit methyltransferase H (155 aa).

S-adenosyl-L-methionine is bound by residues leucine 72, glycine 103, and 122 to 127 (LSDLTL).

The protein belongs to the RNA methyltransferase RlmH family. In terms of assembly, homodimer.

It is found in the cytoplasm. It catalyses the reaction pseudouridine(1915) in 23S rRNA + S-adenosyl-L-methionine = N(3)-methylpseudouridine(1915) in 23S rRNA + S-adenosyl-L-homocysteine + H(+). Specifically methylates the pseudouridine at position 1915 (m3Psi1915) in 23S rRNA. This Polaromonas naphthalenivorans (strain CJ2) protein is Ribosomal RNA large subunit methyltransferase H.